A 563-amino-acid polypeptide reads, in one-letter code: Probable CoA ligase CCL11 (563 aa).

ATP contacts are provided by residues 195–203 (TSGTTSSPK), 328–333 (HGYGMT), D426, 438–441 (IKDR), and K534. Positions 263 to 328 (DGEIIFNLIR…TESLGFVISH (66 aa)) are SBD1. Positions 329–405 (GYGMTEMLGV…LKGSSIMLGY (77 aa)) are SBD2.

The protein belongs to the ATP-dependent AMP-binding enzyme family.

It localises to the cytoplasm. Its subcellular location is the cytosol. The polypeptide is Probable CoA ligase CCL11 (Humulus lupulus (European hop)).